A 65-amino-acid polypeptide reads, in one-letter code: Large ribosomal subunit protein bL33 (65 aa).

The disordered stretch occupies residues 20–42 (APASEKRSPGVSRYTTEKNRRNT).

It belongs to the bacterial ribosomal protein bL33 family.

The protein is Large ribosomal subunit protein bL33 of Prochlorococcus marinus (strain SARG / CCMP1375 / SS120).